Here is a 90-residue protein sequence, read N- to C-terminus: NAD(P)H-quinone oxidoreductase subunit H, chloroplastic (90 aa).

The protein belongs to the complex I 49 kDa subunit family. As to quaternary structure, NDH is composed of at least 16 different subunits, 5 of which are encoded in the nucleus.

The protein resides in the plastid. It is found in the chloroplast thylakoid membrane. It catalyses the reaction a plastoquinone + NADH + (n+1) H(+)(in) = a plastoquinol + NAD(+) + n H(+)(out). The catalysed reaction is a plastoquinone + NADPH + (n+1) H(+)(in) = a plastoquinol + NADP(+) + n H(+)(out). Functionally, NDH shuttles electrons from NAD(P)H:plastoquinone, via FMN and iron-sulfur (Fe-S) centers, to quinones in the photosynthetic chain and possibly in a chloroplast respiratory chain. The immediate electron acceptor for the enzyme in this species is believed to be plastoquinone. Couples the redox reaction to proton translocation, and thus conserves the redox energy in a proton gradient. This Secale cereale (Rye) protein is NAD(P)H-quinone oxidoreductase subunit H, chloroplastic (ndhH).